Reading from the N-terminus, the 117-residue chain is Non-specific lipid-transfer protein (117 aa).

The first 26 residues, 1–26 (MACSAMTKLALVVALCMVVSVPIAQA), serve as a signal peptide directing secretion. Intrachain disulfides connect Cys-29-Cys-76, Cys-39-Cys-53, Cys-54-Cys-99, and Cys-74-Cys-113.

Belongs to the plant LTP family.

Plant non-specific lipid-transfer proteins transfer phospholipids as well as galactolipids across membranes. May play a role in wax or cutin deposition in the cell walls of expanding epidermal cells and certain secretory tissues. In Prunus avium (Cherry), this protein is Non-specific lipid-transfer protein.